A 179-amino-acid chain; its full sequence is Large ribosomal subunit protein uL5 (179 aa).

Belongs to the universal ribosomal protein uL5 family. As to quaternary structure, part of the 50S ribosomal subunit; part of the 5S rRNA/L5/L18/L25 subcomplex. Contacts the 5S rRNA and the P site tRNA. Forms a bridge to the 30S subunit in the 70S ribosome.

Its function is as follows. This is one of the proteins that bind and probably mediate the attachment of the 5S RNA into the large ribosomal subunit, where it forms part of the central protuberance. In the 70S ribosome it contacts protein S13 of the 30S subunit (bridge B1b), connecting the 2 subunits; this bridge is implicated in subunit movement. Contacts the P site tRNA; the 5S rRNA and some of its associated proteins might help stabilize positioning of ribosome-bound tRNAs. The sequence is that of Large ribosomal subunit protein uL5 from Buchnera aphidicola subsp. Acyrthosiphon kondoi (Acyrthosiphon kondoi symbiotic bacterium).